The sequence spans 158 residues: Transcription elongation factor GreA (158 aa).

The stretch at 47–68 forms a coiled coil; it reads AEYDAAKEAQGLLEMRIAKLEE.

Belongs to the GreA/GreB family.

Necessary for efficient RNA polymerase transcription elongation past template-encoded arresting sites. The arresting sites in DNA have the property of trapping a certain fraction of elongating RNA polymerases that pass through, resulting in locked ternary complexes. Cleavage of the nascent transcript by cleavage factors such as GreA or GreB allows the resumption of elongation from the new 3'terminus. GreA releases sequences of 2 to 3 nucleotides. The chain is Transcription elongation factor GreA from Flavobacterium johnsoniae (strain ATCC 17061 / DSM 2064 / JCM 8514 / BCRC 14874 / CCUG 350202 / NBRC 14942 / NCIMB 11054 / UW101) (Cytophaga johnsonae).